The primary structure comprises 117 residues: Non-specific lipid-transfer protein 2B (117 aa).

An N-terminal signal peptide occupies residues 1-25 (MARAQLVLVALVAALLLAGPHTTMA). Disulfide bonds link cysteine 29-cysteine 76, cysteine 39-cysteine 53, cysteine 54-cysteine 99, and cysteine 74-cysteine 113.

The protein belongs to the plant LTP family. Expressed in roots, mesocotyls and developing leaves.

In terms of biological role, plant non-specific lipid-transfer proteins transfer phospholipids as well as galactolipids across membranes. May play a role in wax or cutin deposition in the cell walls of expanding epidermal cells and certain secretory tissues. This Oryza sativa subsp. japonica (Rice) protein is Non-specific lipid-transfer protein 2B (LTP2-B).